The primary structure comprises 197 residues: Imidazoleglycerol-phosphate dehydratase (197 aa).

It belongs to the imidazoleglycerol-phosphate dehydratase family.

It is found in the cytoplasm. The enzyme catalyses D-erythro-1-(imidazol-4-yl)glycerol 3-phosphate = 3-(imidazol-4-yl)-2-oxopropyl phosphate + H2O. Its pathway is amino-acid biosynthesis; L-histidine biosynthesis; L-histidine from 5-phospho-alpha-D-ribose 1-diphosphate: step 6/9. The protein is Imidazoleglycerol-phosphate dehydratase of Rhodopseudomonas palustris (strain BisB5).